An 80-amino-acid polypeptide reads, in one-letter code: MMKLVLFSVIVILFSLIGSIHGADVPGNYPLRPFRYRYGCAVPGDSDYCVRVCRKHGVRYGYCWFFTCWCEYLEDKNIKI.

A signal peptide spans 1-22; that stretch reads MMKLVLFSVIVILFSLIGSIHG. The region spanning 25 to 80 is the LCN-type CS-alpha/beta domain; it reads VPGNYPLRPFRYRYGCAVPGDSDYCVRVCRKHGVRYGYCWFFTCWCEYLEDKNIKI. Intrachain disulfides connect Cys-40–Cys-63, Cys-49–Cys-68, and Cys-53–Cys-70.

It belongs to the long (3 C-C) scorpion toxin superfamily. In terms of tissue distribution, expressed by the venom gland.

Its subcellular location is the secreted. Its function is as follows. Probable ion channel inhibitor. The sequence is that of Toxin-like peptide AaF1CA1 from Androctonus australis (Sahara scorpion).